We begin with the raw amino-acid sequence, 7570 residues long: Dystonin (7570 aa).

Calponin-homology (CH) domains are found at residues 35–138 (KVQK…LHFQ) and 151–255 (MSAK…DAFP). The tract at residues 35 to 252 (KVQKKTFTKW…VITYVSSLYD (218 aa)) is actin-binding. Phosphoserine occurs at positions 135, 184, 236, and 237. Spectrin repeat units follow at residues 602–699 (EINM…RHLD) and 701–802 (LHNF…QHIK). One can recognise an SH3 domain in the interval 887–944 (KTSIPIKAICDYRQIEITIYKDDECVLANNSHRAKWKVISPTGNEAMVPSVCFTVPPP). 2 Spectrin repeats span residues 1293 to 1422 (KYYR…KFAG) and 1440 to 1540 (KEHV…QESQ). The residue at position 1382 (S1382) is a Phosphoserine. A Nuclear localization signal; in isoform 6 motif is present at residues 1383–1389 (PVKRRRM). Phosphoserine is present on E1565. 5 Plectin repeats span residues 1584–1626 (IRLL…QLKE), 1660–1703 (KVLE…LERQ), 1774–1817 (RLLS…LTYQ), 1818–1855 (VQTG…LEAQ), and 1856–1891 (RGYV…KILN). Residue S2229 is modified to Phosphoserine. Disordered stretches follow at residues 2317–2346 (SNTS…IEEY), 2383–2441 (LLND…DETA), and 2585–2616 (DYIY…GKPR). The span at 2336-2345 (DKEDESEIEE) shows a compositional bias: acidic residues. Residues 2385 to 2394 (NDQQNNTGTD) show a composition bias toward low complexity. Acidic residues-rich tracts occupy residues 2395-2412 (TDSD…DDDH), 2430-2439 (YDTLQEENDE), and 2591-2605 (NDQD…DEEG). S2919 is subject to Phosphoserine. Residues 3190–3221 (EASTVPSDSQMSDSSGVSPMTNSSELKPESRD) form a disordered region. Positions 3192–3209 (STVPSDSQMSDSSGVSPM) are enriched in low complexity. 28 Spectrin repeats span residues 3395 to 3501 (LQHT…KQIM), 3643 to 3752 (QEYK…KELD), 3926 to 4040 (EKFD…NNLK), 4047 to 4153 (QHYE…EKLQ), 4160 to 4259 (LSVQ…ETLA), 4269 to 4368 (ELFE…EAVT), 4516 to 4621 (QKAQ…QKLE), 4628 to 4732 (TQFQ…DWID), 4742 to 4842 (QSLL…QHLQ), 4849 to 4951 (HQFQ…NKLK), 4958 to 5058 (LKYK…FCLE), 5068 to 5167 (QEVS…SFLE), 5174 to 5277 (GHFQ…EQVE), 5284 to 5388 (EEFY…AQLQ), 5395 to 5497 (GRFQ…RQLE), 5504 to 5715 (QQFH…KTLE), 5831 to 5933 (QQFD…LQLE), 5941 to 6041 (QFWE…VALD), 6048 to 6154 (TQFH…AKLL), 6161 to 6263 (EKFW…DKLE), 6270 to 6373 (VQYQ…HKLE), 6380 to 6482 (GQFQ…QQLD), 6489 to 6591 (KGFH…TKLE), 6598 to 6700 (MEFH…RSLD), 6707 to 6810 (KQFH…NKLE), 6817 to 6918 (GQFT…TRLE), 6925 to 7027 (EEFH…QRLA), and 7037 to 7167 (QELL…RKLN). A Phosphoserine modification is found at S3968. The residue at position 4749 (S4749) is a Phosphoserine. A Glycyl lysine isopeptide (Lys-Gly) (interchain with G-Cter in ubiquitin) cross-link involves residue K5470. 2 EF-hand domains span residues 7197–7232 (HKKS…SKFP) and 7233–7268 (TSRL…NKDA). Ca(2+) contacts are provided by D7210, D7212, D7214, K7216, E7221, D7246, D7248, D7250, Y7252, and E7257. Residues 7273-7351 (TDADKIEDEV…EFLVKNDPCR (79 aa)) form the GAR domain. Disordered regions lie at residues 7358-7379 (KMLR…AKGR), 7395-7452 (SQGM…SKLR), and 7481-7570 (QFAD…SSKR). The span at 7362 to 7374 (SESNSSITTTQPT) shows a compositional bias: polar residues. Composition is skewed to low complexity over residues 7411 to 7441 (SSRG…TTTP) and 7490 to 7504 (SRPG…GSRA). S7432 is subject to Phosphoserine. S7510, S7513, and S7525 each carry phosphoserine. The span at 7519 to 7535 (EIQSVCSDVETVPQTHR) shows a compositional bias: polar residues. The Microtubule tip localization signal signature appears at 7550–7553 (SKIP).

In terms of assembly, homodimer. Isoform 1 interacts (via N-terminus) with PLEC (via N-terminus). Interacts with the neuronal intermediate filament protein, PRPH. Interacts with DES. Interacts with SYNE3. Isoform 1 and isoform 6 can homodimerize (via N-terminus). Isoform 1 interacts (via N-terminus) with ACTN2. Isoform 1 interacts (via N-terminus) with PLEC (via N-terminus). Isoform 3 interacts (via N-terminus) with COL17A1 (via cytoplasmic region). Isoform 3 interacts (via N-terminus) with ITGB4 isoform beta-4a (via cytoplasmic region). Isoform 3 interacts (via N-terminus) with ERBIN (via C-terminus). Isoform 3 associates (via C-terminal) with KRT5-KRT14 (via rod region) intermediate filaments of keratins. Interacts with MAPRE1; probably required for targeting to the growing microtubule plus ends. Interacts with TMIGD2. Isoform 9 interacts with TMEM108. Isoform 1 is expressed in myoblasts (at protein level). Isoform 3 is expressed in the skin. Isoform 6 is expressed in the brain. Highly expressed in skeletal muscle and cultured keratinocytes.

The protein resides in the cytoplasm. It is found in the cytoskeleton. The protein localises to the stress fiber. It localises to the cell projection. Its subcellular location is the axon. The protein resides in the myofibril. It is found in the sarcomere. The protein localises to the z line. It localises to the h zone. Its subcellular location is the cell junction. The protein resides in the hemidesmosome. It is found in the nucleus. The protein localises to the nucleus envelope. It localises to the membrane. Its subcellular location is the endoplasmic reticulum membrane. The protein resides in the cell cortex. It is found in the cell membrane. Functionally, cytoskeletal linker protein. Acts as an integrator of intermediate filaments, actin and microtubule cytoskeleton networks. Required for anchoring either intermediate filaments to the actin cytoskeleton in neural and muscle cells or keratin-containing intermediate filaments to hemidesmosomes in epithelial cells. The proteins may self-aggregate to form filaments or a two-dimensional mesh. Regulates the organization and stability of the microtubule network of sensory neurons to allow axonal transport. Mediates docking of the dynein/dynactin motor complex to vesicle cargos for retrograde axonal transport through its interaction with TMEM108 and DCTN1. In terms of biological role, plays a structural role in the assembly of hemidesmosomes of epithelial cells; anchors keratin-containing intermediate filaments to the inner plaque of hemidesmosomes. Required for the regulation of keratinocyte polarity and motility; mediates integrin ITGB4 regulation of RAC1 activity. Its function is as follows. Required for bundling actin filaments around the nucleus. Regulates the organization and stability of the microtubule network of sensory neurons to allow axonal transport. This chain is Dystonin, found in Homo sapiens (Human).